A 145-amino-acid polypeptide reads, in one-letter code: Small ribosomal subunit protein uS9 (145 aa).

Residues 1–13 (MATDQHSNKSNVS) are compositionally biased toward polar residues. Residues 1-24 (MATDQHSNKSNVSAARKPLSPSPT) are disordered.

Belongs to the universal ribosomal protein uS9 family.

It localises to the cytoplasm. This chain is Small ribosomal subunit protein uS9 (RPS16), found in Lupinus polyphyllus (Large-leaved lupine).